The following is a 433-amino-acid chain: Legumain (433 aa).

An N-terminal signal peptide occupies residues 1–17 (MVWKVAVFLSVALGIGA). N91 carries an N-linked (GlcNAc...) asparagine glycan. H148 is a catalytic residue. N-linked (GlcNAc...) asparagine glycosylation occurs at N167. C189 (nucleophile) is an active-site residue. N-linked (GlcNAc...) asparagine glycans are attached at residues N263 and N272. Residues 324–433 (DLEESRQLTE…SMDHVCLGHY (110 aa)) constitute a propeptide that is removed on maturation. Cystine bridges form between C378–C412 and C390–C429.

This sequence belongs to the peptidase C13 family. Homodimer before autocatalytic removal of the propeptide. Monomer after autocatalytic processing. May interact with integrins. Post-translationally, activated by autocatalytic processing at pH 4. Ubiquitous. Particularly abundant in kidney, heart and placenta.

The protein localises to the lysosome. It carries out the reaction Hydrolysis of proteins and small molecule substrates at -Asn-|-Xaa- bonds.. With respect to regulation, inhibited by CST6. Has a strict specificity for hydrolysis of asparaginyl bonds. Can also cleave aspartyl bonds slowly, especially under acidic conditions. Involved in the processing of proteins for MHC class II antigen presentation in the lysosomal/endosomal system. Also involved in MHC class I antigen presentation in cross-presenting dendritic cells by mediating cleavage and maturation of Perforin-2 (MPEG1), thereby promoting antigen translocation in the cytosol. Required for normal lysosomal protein degradation in renal proximal tubules. Required for normal degradation of internalized EGFR. Plays a role in the regulation of cell proliferation via its role in EGFR degradation. The chain is Legumain from Homo sapiens (Human).